The sequence spans 129 residues: Succinate dehydrogenase cytochrome b556 subunit (129 aa).

At 1–26 (MIRNVKKQRPVNLDLQTIRFPITAIA) the chain is on the cytoplasmic side. A helical transmembrane segment spans residues 27–52 (SILHRVSGVITFVAVGILLWLLGTSL). Residues 53-68 (SSPEGFEQASAIMGSF) are Periplasmic-facing. The chain crosses the membrane as a helical span at residues 69–89 (FVKFIMWGILTALAYHVVVGI). His-84 lines the heme pocket. Topologically, residues 90–108 (RHMMMDFGYLEETFEAGKR) are cytoplasmic. A helical membrane pass occupies residues 109-129 (SAKISFVITVVLSLLAGVLVW).

It belongs to the cytochrome b560 family. As to quaternary structure, part of an enzyme complex containing four subunits: a flavoprotein, an iron-sulfur protein, plus two membrane-anchoring proteins, SdhC and SdhD. The complex can form homotrimers. Heme is required as a cofactor.

The protein localises to the cell inner membrane. It functions in the pathway carbohydrate metabolism; tricarboxylic acid cycle. In terms of biological role, membrane-anchoring subunit of succinate dehydrogenase (SDH). This is Succinate dehydrogenase cytochrome b556 subunit (sdhC) from Escherichia coli O157:H7.